The primary structure comprises 445 residues: Cyclic GMP-AMP phosphodiesterase SMPDL3A (445 aa).

The first 22 residues, 1 to 22, serve as a signal peptide directing secretion; that stretch reads MALPGNFLCCLLVAWLCDPGLG. Residues D42 and H44 each coordinate Zn(2+). The cysteines at positions 59 and 78 are disulfide-linked. N-linked (GlcNAc...) asparagine glycosylation is present at N66. D107 lines the Zn(2+) pocket. Position 111 (H111) interacts with ATP. N128 carries an N-linked (GlcNAc...) asparagine glycan. N148 is a Zn(2+) binding site. N148 and H149 together coordinate ATP. 2 N-linked (GlcNAc...) asparagine glycosylation sites follow: N219 and N235. Positions 249, 290, and 292 each coordinate Zn(2+). N-linked (GlcNAc...) asparagine glycosylation is found at N353 and N364. 2 disulfide bridges follow: C417-C421 and C427-C440.

It belongs to the acid sphingomyelinase family. As to quaternary structure, monomer. Homodimer; homodimerizes following 2',3'-cGAMP-binding. The cofactor is Zn(2+).

The protein resides in the secreted. It carries out the reaction 2',3'-cGAMP + H2O = 5'-pGpA(2'-5') + H(+). The enzyme catalyses 5'-pGpA(2'-5') + H2O = 5'-GpA(2'-5') + phosphate. It catalyses the reaction a ribonucleoside 5'-triphosphate + H2O = a ribonucleoside 5'-diphosphate + phosphate + H(+). The catalysed reaction is ATP + H2O = ADP + phosphate + H(+). In terms of biological role, cyclic-nucleotide phosphodiesterase that acts as a negative regulator of innate immunity by mediating degradation of 2',3'-cGAMP, thereby inhibiting the cGAS-STING signaling. Specifically linearizes 2',3'-cGAMP into 2'5'-bond pGpA and further hydrolyzes pGpA to produce GpA. Also has in vitro nucleotide phosphodiesterase activity with nucleoside triphosphates, such as ATP. Has in vitro activity with p-nitrophenyl-TMP. Has lower activity with nucleoside diphosphates, and no activity with nucleoside monophosphates. Has in vitro activity with CDP-choline, giving rise to CMP and phosphocholine. Has in vitro activity with CDP-ethanolamine. Does not have sphingomyelin phosphodiesterase activity. This chain is Cyclic GMP-AMP phosphodiesterase SMPDL3A (Smpdl3a), found in Rattus norvegicus (Rat).